The following is a 483-amino-acid chain: Glutamyl-tRNA(Gln) amidotransferase subunit A (483 aa).

Catalysis depends on charge relay system residues lysine 75 and serine 150. Serine 174 functions as the Acyl-ester intermediate in the catalytic mechanism.

It belongs to the amidase family. GatA subfamily. As to quaternary structure, heterotrimer of A, B and C subunits.

The catalysed reaction is L-glutamyl-tRNA(Gln) + L-glutamine + ATP + H2O = L-glutaminyl-tRNA(Gln) + L-glutamate + ADP + phosphate + H(+). Its function is as follows. Allows the formation of correctly charged Gln-tRNA(Gln) through the transamidation of misacylated Glu-tRNA(Gln) in organisms which lack glutaminyl-tRNA synthetase. The reaction takes place in the presence of glutamine and ATP through an activated gamma-phospho-Glu-tRNA(Gln). The chain is Glutamyl-tRNA(Gln) amidotransferase subunit A from Gloeothece citriformis (strain PCC 7424) (Cyanothece sp. (strain PCC 7424)).